The chain runs to 164 residues: SsrA-binding protein (164 aa).

The protein belongs to the SmpB family.

The protein resides in the cytoplasm. Functionally, required for rescue of stalled ribosomes mediated by trans-translation. Binds to transfer-messenger RNA (tmRNA), required for stable association of tmRNA with ribosomes. tmRNA and SmpB together mimic tRNA shape, replacing the anticodon stem-loop with SmpB. tmRNA is encoded by the ssrA gene; the 2 termini fold to resemble tRNA(Ala) and it encodes a 'tag peptide', a short internal open reading frame. During trans-translation Ala-aminoacylated tmRNA acts like a tRNA, entering the A-site of stalled ribosomes, displacing the stalled mRNA. The ribosome then switches to translate the ORF on the tmRNA; the nascent peptide is terminated with the 'tag peptide' encoded by the tmRNA and targeted for degradation. The ribosome is freed to recommence translation, which seems to be the essential function of trans-translation. The protein is SsrA-binding protein of Corynebacterium efficiens (strain DSM 44549 / YS-314 / AJ 12310 / JCM 11189 / NBRC 100395).